The sequence spans 39 residues: Histone H2A (39 aa).

Positions 1 to 18 are enriched in basic residues; sequence AGRGKQGGKVRAKAKTRS. A disordered region spans residues 1–24; it reads AGRGKQGGKVRAKAKTRSSRAGLQ. An N6-(2-hydroxyisobutyryl)lysine modification is found at K5. K5 is subject to N6-acetyllysine. An N6-(2-hydroxyisobutyryl)lysine; alternate modification is found at K9. N6-lactoyllysine; alternate is present on K9. Position 9 is an N6-succinyllysine (K9). Glycyl lysine isopeptide (Lys-Gly) (interchain with G-Cter in ubiquitin) cross-links involve residues K13 and K15. K36 carries the post-translational modification N6-(2-hydroxyisobutyryl)lysine; alternate.

This sequence belongs to the histone H2A family. In terms of assembly, the nucleosome is a histone octamer containing two molecules each of H2A, H2B, H3 and H4 assembled in one H3-H4 heterotetramer and two H2A-H2B heterodimers. The octamer wraps approximately 147 bp of DNA. Post-translationally, monoubiquitination of C-terminus gives a specific tag for epigenetic transcriptional repression. Following DNA double-strand breaks (DSBs), it is ubiquitinated through 'Lys-63' linkage of ubiquitin moieties.

The protein localises to the nucleus. The protein resides in the chromosome. Its function is as follows. Core component of nucleosome. Nucleosomes wrap and compact DNA into chromatin, limiting DNA accessibility to the cellular machineries which require DNA as a template. Histones thereby play a central role in transcription regulation, DNA repair, DNA replication and chromosomal stability. DNA accessibility is regulated via a complex set of post-translational modifications of histones, also called histone code, and nucleosome remodeling. In terms of biological role, buforins are strong antimicrobial activities in vitro against a broad-spectrum of microorganisms including fungi. Buforin II is more potent than buforin I. This Bufo gargarizans (Asian toad) protein is Histone H2A.